Consider the following 56-residue polypeptide: Large ribosomal subunit protein bL32 (56 aa).

This sequence belongs to the bacterial ribosomal protein bL32 family.

This Edwardsiella ictaluri (strain 93-146) protein is Large ribosomal subunit protein bL32.